Consider the following 253-residue polypeptide: Diphthine synthase (253 aa).

S-adenosyl-L-methionine is bound by residues Asp-83, Leu-86, 111–112 (SI), Leu-163, and Leu-205.

The protein belongs to the diphthine synthase family. In terms of assembly, homodimer.

The enzyme catalyses 2-[(3S)-amino-3-carboxypropyl]-L-histidyl-[translation elongation factor 2] + 3 S-adenosyl-L-methionine = diphthine-[translation elongation factor 2] + 3 S-adenosyl-L-homocysteine + 3 H(+). It participates in protein modification; peptidyl-diphthamide biosynthesis. Functionally, S-adenosyl-L-methionine-dependent methyltransferase that catalyzes the trimethylation of the amino group of the modified target histidine residue in translation elongation factor 2 (EF-2), to form an intermediate called diphthine. The three successive methylation reactions represent the second step of diphthamide biosynthesis. In Pyrobaculum neutrophilum (strain DSM 2338 / JCM 9278 / NBRC 100436 / V24Sta) (Thermoproteus neutrophilus), this protein is Diphthine synthase.